An 88-amino-acid chain; its full sequence is Small ribosomal subunit protein bS21 (88 aa).

The segment at 58-88 is disordered; it reads ARKRAQREGLLPMTPRPVAAGGAAGAARPPR. The segment covering 73 to 88 has biased composition (low complexity); that stretch reads RPVAAGGAAGAARPPR.

It belongs to the bacterial ribosomal protein bS21 family.

This chain is Small ribosomal subunit protein bS21, found in Mesorhizobium japonicum (strain LMG 29417 / CECT 9101 / MAFF 303099) (Mesorhizobium loti (strain MAFF 303099)).